Consider the following 157-residue polypeptide: Protein SINE4 (157 aa).

The 54-residue stretch at V104–T157 folds into the KASH domain. Residues F122–F142 form a helical membrane-spanning segment. A Required for nuclear localization motif is present at residues L154 to T157.

Interacts with SUN1 and SUN2.

The protein localises to the nucleus membrane. In Arabidopsis thaliana (Mouse-ear cress), this protein is Protein SINE4.